The primary structure comprises 391 residues: Succinate--CoA ligase [ADP-forming] subunit beta (391 aa).

In terms of domain architecture, ATP-grasp spans 9–247 (KDILAKYGVA…IAEEDPLEVE (239 aa)). Residues lysine 49, 56–58 (GRG), glutamate 102, alanine 105, and glutamate 110 each bind ATP. Mg(2+) is bound by residues asparagine 202 and aspartate 216. Substrate-binding positions include asparagine 267 and 324 to 326 (GIL).

It belongs to the succinate/malate CoA ligase beta subunit family. As to quaternary structure, heterotetramer of two alpha and two beta subunits. The cofactor is Mg(2+).

The catalysed reaction is succinate + ATP + CoA = succinyl-CoA + ADP + phosphate. The enzyme catalyses GTP + succinate + CoA = succinyl-CoA + GDP + phosphate. It participates in carbohydrate metabolism; tricarboxylic acid cycle; succinate from succinyl-CoA (ligase route): step 1/1. Its function is as follows. Succinyl-CoA synthetase functions in the citric acid cycle (TCA), coupling the hydrolysis of succinyl-CoA to the synthesis of either ATP or GTP and thus represents the only step of substrate-level phosphorylation in the TCA. The beta subunit provides nucleotide specificity of the enzyme and binds the substrate succinate, while the binding sites for coenzyme A and phosphate are found in the alpha subunit. This Acidobacterium capsulatum (strain ATCC 51196 / DSM 11244 / BCRC 80197 / JCM 7670 / NBRC 15755 / NCIMB 13165 / 161) protein is Succinate--CoA ligase [ADP-forming] subunit beta.